A 440-amino-acid polypeptide reads, in one-letter code: Glutamate-1-semialdehyde 2,1-aminomutase (440 aa).

Lysine 273 is subject to N6-(pyridoxal phosphate)lysine.

This sequence belongs to the class-III pyridoxal-phosphate-dependent aminotransferase family. HemL subfamily. Homodimer. Requires pyridoxal 5'-phosphate as cofactor.

It localises to the cytoplasm. It carries out the reaction (S)-4-amino-5-oxopentanoate = 5-aminolevulinate. It functions in the pathway porphyrin-containing compound metabolism; protoporphyrin-IX biosynthesis; 5-aminolevulinate from L-glutamyl-tRNA(Glu): step 2/2. The polypeptide is Glutamate-1-semialdehyde 2,1-aminomutase (Alkaliphilus metalliredigens (strain QYMF)).